The chain runs to 1012 residues: RNA-binding protein 26 (1012 aa).

Lysine 94 is covalently cross-linked (Glycyl lysine isopeptide (Lys-Gly) (interchain with G-Cter in SUMO2)). A coiled-coil region spans residues 98–127 (LQHQEKDIKKEELTKEEEREKKFSRRLNHS). A Glycyl lysine isopeptide (Lys-Gly) (interchain with G-Cter in SUMO1); alternate cross-link involves residue lysine 106. Residue lysine 106 forms a Glycyl lysine isopeptide (Lys-Gly) (interchain with G-Cter in SUMO2); alternate linkage. A compositionally biased stretch (basic and acidic residues) spans 106-118 (KKEELTKEEEREK). Residues 106-236 (KKEELTKEEE…PLENNYTPVS (131 aa)) form a disordered region. Serine 127 is modified (phosphoserine). A compositionally biased stretch (basic and acidic residues) spans 134 to 168 (RYRDNRSRDERKKDDRSRKRDYDRNPPRRDSYRDR). Residues 169-186 (YNRRRGRSRSYSRSRSRS) are compositionally biased toward basic residues. 2 stretches are compositionally biased toward basic and acidic residues: residues 187 to 201 (WSKE…DRSR) and 209 to 227 (RSRE…RTDP). Residues 288 to 316 (PMPKKRCRDYDEKGFCMRGDMCPFDHGSD) form a C3H1-type zinc finger. Positions 334 to 388 (QPPVVEGPPPPGLPPPPPILTPPPVNLRPPVPPPGPLPPSLPPVTGPPPPLPPLQ) are enriched in pro residues. Disordered stretches follow at residues 334 to 404 (QPPV…SSVP) and 465 to 520 (IGLT…NFNR). The segment covering 394-404 (APPNSATSSVP) has biased composition (low complexity). Serine 501 is modified (phosphoserine). The residue at position 515 (lysine 515) is an N6-acetyllysine. At serine 523 the chain carries Phosphoserine. The RRM 1 domain maps to 537–611 (TKLELRKVPP…RFIKVYWHRE (75 aa)). Position 621 is a phosphoserine (serine 621). The disordered stretch occupies residues 647–667 (PVPSATTEPAEAQSATSELPQ). Coiled-coil stretches lie at residues 724–800 (DNNE…KSTS) and 828–852 (KKMQ…EAAK). Positions 858–889 (SGRGRGIHTRGRGTAHGRGRGRGRGRGVPGHA) are disordered. Over residues 862-882 (RGIHTRGRGTAHGRGRGRGRG) the composition is skewed to basic residues. The RRM 2 domain occupies 896-965 (RALEISAFTE…QDLKLAWNKP (70 aa)). The tract at residues 970–1012 (SAVDTEEAEPDEEEFQEESLVDDSLLQDDDEEEEDNESRSWRR) is disordered. Residues 973-1005 (DTEEAEPDEEEFQEESLVDDSLLQDDDEEEEDN) show a composition bias toward acidic residues.

In terms of tissue distribution, expressed in testis and ovary.

Its function is as follows. May be involved in the turnover of nuclear polyadenylated (pA+) RNA. The sequence is that of RNA-binding protein 26 from Mus musculus (Mouse).